A 556-amino-acid chain; its full sequence is CDP-diacylglycerol--glycerol-3-phosphate 3-phosphatidyltransferase, mitochondrial (556 aa).

A mitochondrion-targeting transit peptide spans 1-28 (MAVAAAAAAGPVFWRRLLGLLPGRPGLA). Position 49 is a phosphoserine (Ser-49). 124 to 131 (ASLYLGTG) contacts ATP. 2 PLD phosphodiesterase domains span residues 215-241 (TIGL…SDSY) and 460-493 (RGWT…GYRS). Catalysis depends on residues His-220, Lys-222, and Asp-227.

It belongs to the CDP-alcohol phosphatidyltransferase class-II family.

It localises to the mitochondrion. The enzyme catalyses a CDP-1,2-diacyl-sn-glycerol + sn-glycerol 3-phosphate = a 1,2-diacyl-sn-glycero-3-phospho-(1'-sn-glycero-3'-phosphate) + CMP + H(+). Its pathway is phospholipid metabolism; phosphatidylglycerol biosynthesis; phosphatidylglycerol from CDP-diacylglycerol: step 1/2. Its activity is regulated as follows. Activated by calcium and magnesium and inhibited by other bivalent cations. Functions in the biosynthesis of the anionic phospholipids phosphatidylglycerol and cardiolipin. The sequence is that of CDP-diacylglycerol--glycerol-3-phosphate 3-phosphatidyltransferase, mitochondrial (PGS1) from Homo sapiens (Human).